A 242-amino-acid polypeptide reads, in one-letter code: 1-(5-phosphoribosyl)-5-[(5-phosphoribosylamino)methylideneamino] imidazole-4-carboxamide isomerase (242 aa).

Asp-10 functions as the Proton acceptor in the catalytic mechanism. Asp-132 functions as the Proton donor in the catalytic mechanism.

The protein belongs to the HisA/HisF family.

The protein localises to the cytoplasm. The enzyme catalyses 1-(5-phospho-beta-D-ribosyl)-5-[(5-phospho-beta-D-ribosylamino)methylideneamino]imidazole-4-carboxamide = 5-[(5-phospho-1-deoxy-D-ribulos-1-ylimino)methylamino]-1-(5-phospho-beta-D-ribosyl)imidazole-4-carboxamide. Its pathway is amino-acid biosynthesis; L-histidine biosynthesis; L-histidine from 5-phospho-alpha-D-ribose 1-diphosphate: step 4/9. This chain is 1-(5-phosphoribosyl)-5-[(5-phosphoribosylamino)methylideneamino] imidazole-4-carboxamide isomerase, found in Methanothrix thermoacetophila (strain DSM 6194 / JCM 14653 / NBRC 101360 / PT) (Methanosaeta thermophila).